Here is a 383-residue protein sequence, read N- to C-terminus: Anhydro-N-acetylmuramic acid kinase (383 aa).

ATP is bound at residue 9-16 (GTSLDGID).

Belongs to the anhydro-N-acetylmuramic acid kinase family.

It catalyses the reaction 1,6-anhydro-N-acetyl-beta-muramate + ATP + H2O = N-acetyl-D-muramate 6-phosphate + ADP + H(+). It functions in the pathway amino-sugar metabolism; 1,6-anhydro-N-acetylmuramate degradation. It participates in cell wall biogenesis; peptidoglycan recycling. Its function is as follows. Catalyzes the specific phosphorylation of 1,6-anhydro-N-acetylmuramic acid (anhMurNAc) with the simultaneous cleavage of the 1,6-anhydro ring, generating MurNAc-6-P. Is required for the utilization of anhMurNAc either imported from the medium or derived from its own cell wall murein, and thus plays a role in cell wall recycling. In Bacillus cereus (strain ATCC 10987 / NRS 248), this protein is Anhydro-N-acetylmuramic acid kinase.